Reading from the N-terminus, the 133-residue chain is uncharacterized protein (133 aa).

The 120-residue stretch at 9 to 128 (RILVYSDNVQ…VLGRTVLSLL (120 aa)) folds into the Response regulatory domain. 4-aspartylphosphate is present on Asp-64.

This is an uncharacterized protein from Mycobacterium tuberculosis (strain CDC 1551 / Oshkosh).